The sequence spans 375 residues: Alcohol dehydrogenase 1 (375 aa).

Serine 2 carries the post-translational modification N-acetylserine. Positions 47, 68, 98, 101, 104, 112, and 175 each coordinate Zn(2+). Residues 200–205 (WSGRVG), aspartate 224, and lysine 229 each bind NAD(+). Residue lysine 234 is modified to N6-succinyllysine. Residue 293–295 (VGV) participates in NAD(+) binding. Lysine 340 is subject to N6-succinyllysine. NAD(+) is bound at residue arginine 370.

It belongs to the zinc-containing alcohol dehydrogenase family. Class-I subfamily. Homodimer. Requires Zn(2+) as cofactor.

The protein resides in the cytoplasm. The enzyme catalyses a primary alcohol + NAD(+) = an aldehyde + NADH + H(+). It catalyses the reaction a secondary alcohol + NAD(+) = a ketone + NADH + H(+). This Geomys bursarius (Plains pocket gopher) protein is Alcohol dehydrogenase 1 (ADH1).